A 229-amino-acid chain; its full sequence is MHEAFTIEQLPPSWQEQLKDEWSQPYWSQLLAFLKSEYAQAKIYPKKENIFAALRSTPFDQVRVVILGQDPYHGEGQAHGLSFSVPRGQALPPSLRNIFQELHTDLGIRNESGCLQAWADQGVLLLNTVLTVRAGEAFSHAGRGWERFTDAIVTKLIQNRTHVIFVLWGNAARQKCNLLFQTKHQHAVLACPHPSPLAAHRGFFGCCHFSKINYLLKKQGKTMINWKIE.

Residue D70 is the Proton acceptor of the active site.

This sequence belongs to the uracil-DNA glycosylase (UDG) superfamily. UNG family.

The protein localises to the cytoplasm. It catalyses the reaction Hydrolyzes single-stranded DNA or mismatched double-stranded DNA and polynucleotides, releasing free uracil.. Its function is as follows. Excises uracil residues from the DNA which can arise as a result of misincorporation of dUMP residues by DNA polymerase or due to deamination of cytosine. In Chlamydia trachomatis serovar L2b (strain UCH-1/proctitis), this protein is Uracil-DNA glycosylase.